Consider the following 311-residue polypeptide: Methionyl-tRNA formyltransferase (311 aa).

Position 112–115 (112–115 (SLLP)) interacts with (6S)-5,6,7,8-tetrahydrofolate.

This sequence belongs to the Fmt family.

The catalysed reaction is L-methionyl-tRNA(fMet) + (6R)-10-formyltetrahydrofolate = N-formyl-L-methionyl-tRNA(fMet) + (6S)-5,6,7,8-tetrahydrofolate + H(+). Attaches a formyl group to the free amino group of methionyl-tRNA(fMet). The formyl group appears to play a dual role in the initiator identity of N-formylmethionyl-tRNA by promoting its recognition by IF2 and preventing the misappropriation of this tRNA by the elongation apparatus. This chain is Methionyl-tRNA formyltransferase, found in Bradyrhizobium diazoefficiens (strain JCM 10833 / BCRC 13528 / IAM 13628 / NBRC 14792 / USDA 110).